The following is a 325-amino-acid chain: MGKKVIVLGEIRDGELRNVTFEAIAAGRTISGDGEVIGVLIGENVQSIAQELIHYGADKVLTAEDPKLKTYTADGYSQVMRGVIEQENPDSVIFGHTAMGKDLSPKLAARLQTGLISDAIDVSVTGGNVVFTRPIYSGKAFERVISTDPMIFATIRPNNIQASEKDTSRSGSIESIDVSLTDLRTVIQEVVKKTADGVDLSEAKIIVAGGRGVKSKEGFQPLQELAEVLGAAVGASRGACDADYCDYALQIGQTGKVVTPDLYIACGISGAIQHLAGMSNSKVIVAINKDPEADIFKIADYGIVGDLFEVVPLLTEEFKQLNIHS.

Residue 262 to 290 (LYIACGISGAIQHLAGMSNSKVIVAINKD) participates in FAD binding.

It belongs to the ETF alpha-subunit/FixB family. Heterodimer of an alpha and a beta subunit. It depends on FAD as a cofactor.

Functionally, the electron transfer flavoprotein serves as a specific electron acceptor for other dehydrogenases. It transfers the electrons to the main respiratory chain via ETF-ubiquinone oxidoreductase (ETF dehydrogenase). This is Electron transfer flavoprotein subunit alpha (etfA) from Bacillus subtilis (strain 168).